A 281-amino-acid chain; its full sequence is Fructose-bisphosphate aldolase class 1 (281 aa).

Catalysis depends on Lys191, which acts as the Schiff-base intermediate with dihydroxyacetone-P.

It belongs to the DeoC/FbaB aldolase family. As to quaternary structure, homooctamer.

The protein localises to the cytoplasm. The enzyme catalyses beta-D-fructose 1,6-bisphosphate = D-glyceraldehyde 3-phosphate + dihydroxyacetone phosphate. Activated by citrate. The polypeptide is Fructose-bisphosphate aldolase class 1 (fba) (Pyrococcus furiosus (strain ATCC 43587 / DSM 3638 / JCM 8422 / Vc1)).